Here is a 177-residue protein sequence, read N- to C-terminus: Probasin (177 aa).

Residues 1–17 (MRVILLLLTLDVLGVSS) form the signal peptide. A disulfide bridge connects residues cysteine 79 and cysteine 170.

Belongs to the calycin superfamily. Lipocalin family. Prostatic epithelial cells.

Its subcellular location is the nucleus. It is found in the secreted. The protein is Probasin (Pbsn) of Rattus norvegicus (Rat).